The chain runs to 610 residues: Tyrosine-protein kinase Drl (610 aa).

Residues 1-20 (MAPNLLTIGLLLTLIASGQA) form the signal peptide. Over 21-242 (HLNIFLNLHE…RENLVPPASG (222 aa)) the chain is Extracellular. Positions 24–155 (IFLNLHEVLR…NLIFKRKKIC (132 aa)) constitute a WIF domain. N63, N99, and N143 each carry an N-linked (GlcNAc...) asparagine glycan. A disordered region spans residues 202–230 (QAPEKQRPVVTESPVGRGNSGGSKRDFDP). Residues 243–263 (LVTLIVGGILALVLVSTLILI) traverse the membrane as a helical segment. The Cytoplasmic portion of the chain corresponds to 264–610 (AYCAKGPSKR…EFHTQITRYV (347 aa)). The region spanning 343 to 606 (VRLSCLVQEG…ICLSEFHTQI (264 aa)) is the Protein kinase domain. ATP contacts are provided by residues 349–357 (VQEGNFGRI) and K371. The active-site Proton acceptor is the D468. Y498 carries the phosphotyrosine; by autocatalysis modification.

This sequence belongs to the protein kinase superfamily. Tyr protein kinase family. As to expression, in the embryonic abdominal hemisegment, expression is restricted to cell body, axon and growth cone of a cluster of 20 ventral nerve cord interneurons. During muscle growth and attachment events in the embryonic abdominal hemisegment, expression is in somatic muscle fibers 21-23 at 10-13 hours and 2 patches of approximately 15 neighboring epidermal cells (dorsal and ventral attachment sites) at 6-13 hours.

The protein resides in the cell membrane. It catalyses the reaction L-tyrosyl-[protein] + ATP = O-phospho-L-tyrosyl-[protein] + ADP + H(+). Probable coreceptor of Wnt proteins. Involved in neuronal pathway recognition and ventral muscle attachment site selection. Non-vital for development. May be part of a signal transduction cascade involved in learning and possibly memory. This chain is Tyrosine-protein kinase Drl (drl), found in Drosophila melanogaster (Fruit fly).